We begin with the raw amino-acid sequence, 178 residues long: uncharacterized protein (178 aa).

The first 23 residues, 1–23, serve as a signal peptide directing secretion; sequence MNYSVIWAITILILGLVLTLAWA.

This is an uncharacterized protein from Invertebrate iridescent virus 3 (IIV-3).